Consider the following 183-residue polypeptide: Nucleoside triphosphate pyrophosphatase (183 aa).

Asp71 serves as the catalytic Proton acceptor.

Belongs to the Maf family. It depends on a divalent metal cation as a cofactor.

It localises to the cytoplasm. It carries out the reaction a ribonucleoside 5'-triphosphate + H2O = a ribonucleoside 5'-phosphate + diphosphate + H(+). It catalyses the reaction a 2'-deoxyribonucleoside 5'-triphosphate + H2O = a 2'-deoxyribonucleoside 5'-phosphate + diphosphate + H(+). In terms of biological role, nucleoside triphosphate pyrophosphatase. May have a dual role in cell division arrest and in preventing the incorporation of modified nucleotides into cellular nucleic acids. This chain is Nucleoside triphosphate pyrophosphatase, found in Campylobacter jejuni subsp. doylei (strain ATCC BAA-1458 / RM4099 / 269.97).